The primary structure comprises 428 residues: Palmitoyltransferase ZDHHC23-B (428 aa).

Topologically, residues 1–82 (MSIMKKRSSR…RVPWISGARQ (82 aa)) are cytoplasmic. The chain crosses the membrane as a helical span at residues 83–99 (IDVSLIPPLILLPVFLH). The Lumenal portion of the chain corresponds to 100–105 (IAALHY). Residues 106–125 (LLGIIMLTAMPITVLWYYFF) traverse the membrane as a helical segment. At 126 to 132 (THRKKGR) the chain is on the cytoplasmic side. The helical transmembrane segment at 133–153 (TLFFLGLALFSLFYMFYLFLT) threads the bilayer. Over 154–160 (QVVPRGE) the chain is Lumenal. The helical transmembrane segment at 161–181 (VTELQLAVVTAGVALTVIFLM) threads the bilayer. Residues 182–294 (LTKRGPGLVR…SCVGLANHRT (113 aa)) are Cytoplasmic-facing. A DHHC domain is found at 250-300 (NWCAVCKVVRPQRAGHCRICGVCVLRLDHHCVWINSCVGLANHRTFLLTLL). Cys280 functions as the S-palmitoyl cysteine intermediate in the catalytic mechanism. Residues 295–315 (FLLTLLFFLLTSIYGISLVLA) traverse the membrane as a helical segment. Over 316–350 (SVCPDQRVLTALFYCPDVYSQYSSALCFTCAWYSS) the chain is Lumenal. Residues 351-371 (IVTGGLLHLLLLQILNISLNV) traverse the membrane as a helical segment. At 372–428 (TEREARLALREKSAQRRLWGLIVHTGHYSRGFWSNWTEFLTMTEDTQPAGHKTEDLV) the chain is on the cytoplasmic side.

Belongs to the DHHC palmitoyltransferase family.

It localises to the golgi apparatus membrane. The protein resides in the golgi apparatus. The protein localises to the trans-Golgi network membrane. It carries out the reaction L-cysteinyl-[protein] + hexadecanoyl-CoA = S-hexadecanoyl-L-cysteinyl-[protein] + CoA. Its function is as follows. Palmitoyltransferase that could catalyze the addition of palmitate onto various protein substrates and be involved in a variety of cellular processes. This Danio rerio (Zebrafish) protein is Palmitoyltransferase ZDHHC23-B.